We begin with the raw amino-acid sequence, 1193 residues long: Pyruvate carboxylase (1193 aa).

One can recognise a Biotin carboxylation domain in the interval 41 to 493 (QFQKILVANR…WTTFIDDTPE (453 aa)). Residues Lys-159, Glu-243, and His-278 each contribute to the ATP site. The 198-residue stretch at 163 to 360 (RQLAIRCNVP…IVAAQIQIAA (198 aa)) folds into the ATP-grasp domain. The active site involves Arg-335. The Pyruvate carboxyltransferase domain maps to 579 to 847 (CLIMDTTWRD…DPGLNSAHVR (269 aa)). Residues 587 to 591 (RDAHQ) and Arg-660 each bind substrate. An a divalent metal cation-binding site is contributed by Asp-588. Positions 756, 786, and 788 each coordinate a divalent metal cation. Lys-756 bears the N6-carboxylysine mark. Thr-921 contributes to the substrate binding site. One can recognise a Biotinyl-binding domain in the interval 1116–1191 (KADVGDSSQV…DGQDLVCKIT (76 aa)). Position 1157 is an N6-biotinyllysine (Lys-1157).

Requires biotin as cofactor. Zn(2+) serves as cofactor.

The protein resides in the cytoplasm. The enzyme catalyses hydrogencarbonate + pyruvate + ATP = oxaloacetate + ADP + phosphate + H(+). It participates in carbohydrate biosynthesis; gluconeogenesis. Its function is as follows. Pyruvate carboxylase catalyzes a 2-step reaction, involving the ATP-dependent carboxylation of the covalently attached biotin in the first step and the transfer of the carboxyl group to pyruvate in the second. The sequence is that of Pyruvate carboxylase (pyc) from Aspergillus terreus.